A 245-amino-acid polypeptide reads, in one-letter code: Protein canopy homolog 4 (245 aa).

The signal sequence occupies residues 1 to 27 (MCGLRFIMGPVRLEILLFILAAYGAWA). Intrachain disulfides connect Cys-44–Cys-202, Cys-47–Cys-190, and Cys-100–Cys-162. The tract at residues 207 to 245 (WTGKEKISDGQEEADDEEEEEEEEITKTSGNPKHDPEDL) is disordered. A coiled-coil region spans residues 209 to 237 (GKEKISDGQEEADDEEEEEEEEITKTSGN). Residues 216–230 (GQEEADDEEEEEEEE) are compositionally biased toward acidic residues.

This sequence belongs to the canopy family. In terms of assembly, interacts with TLR4. In terms of tissue distribution, highly expressed in lung, spleen, thymus, and uterus. Moderately expressed in kidney, stomach and placenta. Weakly expressed in brain, heart, liver, small intestine, skeletal muscle and testis.

The protein localises to the secreted. In terms of biological role, plays a role in the regulation of the cell surface expression of TLR4. The protein is Protein canopy homolog 4 (Cnpy4) of Mus musculus (Mouse).